The sequence spans 190 residues: Elongation factor P (190 aa).

An N6-(3,6-diaminohexanoyl)-5-hydroxylysine modification is found at Lys34.

Belongs to the elongation factor P family. May be beta-lysylated on the epsilon-amino group of Lys-34 by the combined action of EpmA and EpmB, and then hydroxylated on the C5 position of the same residue by EpmC (if this protein is present). Lysylation is critical for the stimulatory effect of EF-P on peptide-bond formation. The lysylation moiety may extend toward the peptidyltransferase center and stabilize the terminal 3-CCA end of the tRNA. Hydroxylation of the C5 position on Lys-34 may allow additional potential stabilizing hydrogen-bond interactions with the P-tRNA.

The protein localises to the cytoplasm. The protein operates within protein biosynthesis; polypeptide chain elongation. Functionally, involved in peptide bond synthesis. Alleviates ribosome stalling that occurs when 3 or more consecutive Pro residues or the sequence PPG is present in a protein, possibly by augmenting the peptidyl transferase activity of the ribosome. Modification of Lys-34 is required for alleviation. The chain is Elongation factor P from Psychrobacter cryohalolentis (strain ATCC BAA-1226 / DSM 17306 / VKM B-2378 / K5).